We begin with the raw amino-acid sequence, 554 residues long: Glucose-binding protein GlcS (554 aa).

Residues 1-17 are Cytoplasmic-facing; it reads MKRKYPYSLAKGLTSTQ. The helical transmembrane segment at 18–38 threads the bilayer; it reads IAVIVAVIVIVIIIGVVAGFV. Residues 39–525 lie on the Extracellular side of the membrane; it reads LTKGPSTTAV…YGLTNNTQKT (487 aa). Residues 526-546 traverse the membrane as a helical segment; that stretch reads SNSVMLFLLPFLALPLAIASI. The Cytoplasmic segment spans residues 547-554; that stretch reads DNKYYLLK.

It belongs to the bacterial solute-binding protein 1 family. As to quaternary structure, the complex is composed of two ATP-binding proteins (GlcV), two transmembrane proteins (GlcT and GlcU) and a solute-binding protein (GlcS).

It localises to the cell membrane. Its activity is regulated as follows. Binding of glucose is strongly inhibited by galactose and mannose. Functionally, part of the ABC transporter complex GlcSTUV involved in glucose uptake. Binds glucose. Can also bind galactose and mannose. The sequence is that of Glucose-binding protein GlcS from Saccharolobus solfataricus (strain ATCC 35092 / DSM 1617 / JCM 11322 / P2) (Sulfolobus solfataricus).